The primary structure comprises 246 residues: UDP-N-acetyl-D-mannosaminuronic acid transferase (246 aa).

This sequence belongs to the glycosyltransferase 26 family.

It carries out the reaction UDP-N-acetyl-alpha-D-mannosaminouronate + N-acetyl-alpha-D-glucosaminyl-di-trans,octa-cis-undecaprenyl diphosphate = beta-D-ManNAcA-(1-&gt;4)-alpha-D-GlcNAc-di-trans,octa-cis-undecaprenyl diphosphate + UDP + H(+). The protein operates within bacterial outer membrane biogenesis; enterobacterial common antigen biosynthesis. Functionally, catalyzes the synthesis of Und-PP-GlcNAc-ManNAcA (Lipid II), the second lipid-linked intermediate involved in enterobacterial common antigen (ECA) synthesis. The polypeptide is UDP-N-acetyl-D-mannosaminuronic acid transferase (Klebsiella pneumoniae (strain 342)).